The sequence spans 790 residues: Aryl hydrocarbon receptor nuclear translocator (790 aa).

Residues 1–25 (MAATTANPEMTSDVPSLGPNITSGN) are compositionally biased toward polar residues. Residues 1-98 (MAATTANPEM…LARENHSEIE (98 aa)) are disordered. Alanine 2 is modified (N-acetylalanine). Lysine 58 participates in a covalent cross-link: Glycyl lysine isopeptide (Lys-Gly) (interchain with G-Cter in SUMO2). Residues 60 to 98 (LRCDEDQMSNDKERFARSDDEQSSADKERLARENHSEIE) are compositionally biased toward basic and acidic residues. Serine 77 is modified (phosphoserine). Positions 88–128 (RLARENHSEIERRRRNKMTAYITELSDIVPTCSALARKPDK) are DNA-binding. The 54-residue stretch at 89-142 (LARENHSEIERRRRNKMTAYITELSDIVPTCSALARKPDKLTILRMAVSHMKSL) folds into the bHLH domain. Residues 112 to 168 (LSDIVPTCSALARKPDKLTILRMAVSHMKSLRGTGNTSTDGSYKPSFLTDQELKHLI) form a required for heterodimer formation with HIF1A region. The tract at residues 112–264 (LSDIVPTCSA…MCMGSRRSFI (153 aa)) is required for heterodimer formation with EPAS1. PAS domains are found at residues 161–235 (DQEL…LTGR) and 349–419 (PNCT…VKLK). Residues 167–171 (LILEA) are mediates the transcription activity and dimerization of the AHR:ARNT complex. Residues 424–467 (SVMFRFRSKNREWLWTRTSSFTFQNPYSDEIEYIICTNTNVKNS) form the PAC domain. 2 stretches are compositionally biased toward polar residues: residues 465–480 (KNSSQEPRPTLSNPIQ) and 629–672 (HSNP…GNFQ). Disordered regions lie at residues 465 to 494 (KNSSQEPRPTLSNPIQRPQLGPTANLPLEV), 629 to 695 (HSNP…AAAY), and 729 to 790 (QWQG…SFSE). Positions 673 to 695 (SPSSFSSMSLSSTSTASSGAAAY) are enriched in low complexity. Residues 741–758 (SSEQHVQQPSTQQPNQPE) are compositionally biased toward polar residues.

As to quaternary structure, monomer. Homodimer only upon binding to a DNA. Efficient DNA binding requires dimerization with another bHLH protein. Interacts with TACC3. Interacts with HIF1A, EPAS1, NPAS1 and NPAS3; forms a heterodimer that binds core DNA sequence 5'-TACGTG-3' within the hypoxia response element (HRE) of target gene promoters. Forms a heterodimer with AHRR, as well as with other bHLH proteins. Interacts with NOCA7. Interacts with TACC3. Interacts with AHR; the heterodimer ARNT:AHR binds to core DNA sequence 5'-TGCGTG-3' within the dioxin response element (DRE) of target gene promoters and activates their transcription. Interacts with SIM1 and NPAS4. Was expressed at almost the same level in all tissues except for the heart, liver, and small intestine.

The protein localises to the nucleus. Functionally, required for activity of the AHR. Upon ligand binding, AHR translocates into the nucleus, where it heterodimerizes with ARNT and induces transcription by binding to xenobiotic response elements (XRE). Not required for the ligand-binding subunit to translocate from the cytosol to the nucleus after ligand binding. The complex initiates transcription of genes involved in the regulation of a variety of biological processes, including angiogenesis, hematopoiesis, drug and lipid metabolism, cell motility and immune modulation. The heterodimer binds to core DNA sequence 5'-TACGTG-3' within the hypoxia response element (HRE) of target gene promoters and functions as a transcriptional regulator of the adaptive response to hypoxia. The heterodimer ARNT:AHR binds to core DNA sequence 5'-TGCGTG-3' within the dioxin response element (DRE) of target gene promoters and activates their transcription. The chain is Aryl hydrocarbon receptor nuclear translocator (ARNT) from Oryctolagus cuniculus (Rabbit).